Reading from the N-terminus, the 241-residue chain is ATP synthase subunit a (241 aa).

A run of 5 helical transmembrane segments spans residues 30–50, 91–111, 128–148, 193–213, and 214–234; these read GQVFMTSWILIGALLTLVVVG, FIGTLFLFIFVSNWGGALIPW, INTTVALALLVSLSYFYAGLS, LVVAVLVFLVPLVLPVPVMFL, and GLFTSAIQALIFATLAAYYIG.

This sequence belongs to the ATPase A chain family. In terms of assembly, F-type ATPases have 2 components, CF(1) - the catalytic core - and CF(0) - the membrane proton channel. CF(1) has five subunits: alpha(3), beta(3), gamma(1), delta(1), epsilon(1). CF(0) has four main subunits: a, b, b' and c.

It is found in the cellular thylakoid membrane. Its function is as follows. Key component of the proton channel; it plays a direct role in the translocation of protons across the membrane. This Prochlorococcus marinus (strain SARG / CCMP1375 / SS120) protein is ATP synthase subunit a.